The primary structure comprises 439 residues: Ornithine aminotransferase, mitochondrial (439 aa).

The N-terminal 25 residues, 1-25 (MFSKLAHLQRFAVLSRGVHSSVASA), are a transit peptide targeting the mitochondrion; in hepatic form. The transit peptide at 1–35 (MFSKLAHLQRFAVLSRGVHSSVASATSVATKKTVQ) directs the protein to the mitochondrion; in renal form. An N6-acetyllysine mark is found at Lys49 and Lys66. Lys102 carries the N6-succinyllysine modification. At Lys107 the chain carries N6-acetyllysine; alternate. Lys107 carries the post-translational modification N6-succinyllysine; alternate. At Lys292 the chain carries N6-(pyridoxal phosphate)lysine. Lys362 carries the post-translational modification N6-acetyllysine; alternate. The residue at position 362 (Lys362) is an N6-succinyllysine; alternate. 2 positions are modified to N6-acetyllysine: Lys386 and Lys392. Lys405 carries the N6-acetyllysine; alternate modification. Position 405 is an N6-succinyllysine; alternate (Lys405). The residue at position 421 (Lys421) is an N6-acetyllysine.

This sequence belongs to the class-III pyridoxal-phosphate-dependent aminotransferase family. Homohexamer. Pyridoxal 5'-phosphate is required as a cofactor.

It localises to the mitochondrion matrix. It catalyses the reaction L-ornithine + 2-oxoglutarate = L-glutamate 5-semialdehyde + L-glutamate. Its pathway is amino-acid biosynthesis; L-proline biosynthesis; L-glutamate 5-semialdehyde from L-ornithine: step 1/1. Functionally, catalyzes the reversible interconversion of L-ornithine and 2-oxoglutarate to L-glutamate semialdehyde and L-glutamate. The protein is Ornithine aminotransferase, mitochondrial (OAT) of Homo sapiens (Human).